We begin with the raw amino-acid sequence, 296 residues long: MTEWVPLLDNRRQLQIRELIVEATRADGIAPVGEQVLRELRGTGAKHLVAEDGDDVAAFLNLVVPDEAASENATAMAELVVAPAARRRGIGSAMVREALAEGGAGTRVWAHGDLPAAQSLATKLGLVALRRLHQMRRALADLPAIRVDASVTVRHYLGPQDDSDLLRVNNAAFSWHPEQGGWTPGDLADRFAEPWFDPRGLFLAHDVQTAKLLGFHWTKRHLDKPGMGEVYIVGVDPAAQGRGLGHLLTLVGLHHLAGLGLETVLLYVESDNQAALRTYERLGFAVALTDAAYGRA.

N-acetyltransferase domains follow at residues 1–148 (MTEW…IRVD) and 151–296 (VTVR…YGRA). Position 34 (glutamate 34) interacts with 1D-myo-inositol 2-(L-cysteinylamino)-2-deoxy-alpha-D-glucopyranoside. Residues 79 to 81 (LVV) and 87 to 92 (RRGIGS) each bind acetyl-CoA. 1D-myo-inositol 2-(L-cysteinylamino)-2-deoxy-alpha-D-glucopyranoside-binding residues include glutamate 178, lysine 219, and glutamate 229. Acetyl-CoA contacts are provided by residues 233 to 235 (VGV) and 240 to 246 (QGRGLGH). Tyrosine 267 serves as a coordination point for 1D-myo-inositol 2-(L-cysteinylamino)-2-deoxy-alpha-D-glucopyranoside. Acetyl-CoA is bound at residue 272-277 (NQAALR).

The protein belongs to the acetyltransferase family. MshD subfamily. In terms of assembly, monomer.

It carries out the reaction 1D-myo-inositol 2-(L-cysteinylamino)-2-deoxy-alpha-D-glucopyranoside + acetyl-CoA = mycothiol + CoA + H(+). Functionally, catalyzes the transfer of acetyl from acetyl-CoA to desacetylmycothiol (Cys-GlcN-Ins) to form mycothiol. The sequence is that of Mycothiol acetyltransferase from Mycobacteroides abscessus (strain ATCC 19977 / DSM 44196 / CCUG 20993 / CIP 104536 / JCM 13569 / NCTC 13031 / TMC 1543 / L948) (Mycobacterium abscessus).